The sequence spans 932 residues: Lon protease homolog 2, peroxisomal (932 aa).

One can recognise a Lon N-terminal domain in the interval 11-259 (LALVPLPKGS…RVVELLARQV (249 aa)). A disordered region spans residues 304 to 340 (TGLTPPGAAGGRNNEDEKETNEVDELQKRLQEAELSP). A compositionally biased stretch (basic and acidic residues) spans 328–340 (ELQKRLQEAELSP). ATP is bound at residue 486–493 (GPPGTGKT). The Lon proteolytic domain occupies 729-916 (HGRPGVVTGL…WEAIRQVWPG (188 aa)). Active-site residues include serine 822 and lysine 865. The Microbody targeting signal motif lies at 930-932 (SRL).

The protein belongs to the peptidase S16 family.

It is found in the peroxisome matrix. The catalysed reaction is Hydrolysis of proteins in presence of ATP.. In terms of biological role, ATP-dependent serine protease that mediates the selective degradation of misfolded and unassembled polypeptides in the peroxisomal matrix. Necessary for type 2 peroxisome targeting signal (PTS2)-containing protein processing and facilitates peroxisome matrix protein import. The protein is Lon protease homolog 2, peroxisomal of Aspergillus fumigatus (strain ATCC MYA-4609 / CBS 101355 / FGSC A1100 / Af293) (Neosartorya fumigata).